The sequence spans 152 residues: Large ribosomal subunit protein uL15 (152 aa).

The segment at 31-58 is disordered; the sequence is GASCGFGMRGQKSRSGRPTRPGFEGGQM.

The protein belongs to the universal ribosomal protein uL15 family. Part of the 50S ribosomal subunit.

Binds to the 23S rRNA. In Parasynechococcus marenigrum (strain WH8102), this protein is Large ribosomal subunit protein uL15.